The primary structure comprises 205 residues: Protein N-terminal glutamine amidohydrolase (205 aa).

Catalysis depends on residues Cys-20, His-74, and Asp-90.

This sequence belongs to the NTAQ1 family. As to quaternary structure, monomer.

The catalysed reaction is N-terminal L-glutaminyl-[protein] + H2O = N-terminal L-glutamyl-[protein] + NH4(+). Mediates the side-chain deamidation of N-terminal glutamine residues to glutamate, an important step in N-end rule pathway of protein degradation. Conversion of the resulting N-terminal glutamine to glutamate renders the protein susceptible to arginylation, polyubiquitination and degradation as specified by the N-end rule. Does not act on substrates with internal or C-terminal glutamine and does not act on non-glutamine residues in any position. The sequence is that of Protein N-terminal glutamine amidohydrolase (tun) from Drosophila ananassae (Fruit fly).